Reading from the N-terminus, the 214-residue chain is Heat shock protein 30 (214 aa).

A sHSP domain is found at 66–183 (VPSSLTIQPV…AERVVPINCS (118 aa)). Residues 193-214 (SKTEGSITDTQKKQENTISKED) form a disordered region. A compositionally biased stretch (basic and acidic residues) spans 202 to 214 (TQKKQENTISKED).

It belongs to the small heat shock protein (HSP20) family.

The polypeptide is Heat shock protein 30 (hsp30) (Oncorhynchus tshawytscha (Chinook salmon)).